A 268-amino-acid chain; its full sequence is Small ribosomal subunit protein eS1 (268 aa).

Disordered regions lie at residues 1–21 (MAVG…KKKV) and 238–268 (GGGK…QEAV).

This sequence belongs to the eukaryotic ribosomal protein eS1 family. In terms of assembly, component of the small ribosomal subunit. Mature ribosomes consist of a small (40S) and a large (60S) subunit. The 40S subunit contains about 33 different proteins and 1 molecule of RNA (18S). The 60S subunit contains about 49 different proteins and 3 molecules of RNA (28S, 5.8S and 5S).

The protein resides in the cytoplasm. Its function is as follows. Essential for oogenesis; required for late follicle cell development. This chain is Small ribosomal subunit protein eS1, found in Drosophila ananassae (Fruit fly).